Reading from the N-terminus, the 328-residue chain is Tetraacyldisaccharide 4'-kinase (328 aa).

ATP is bound at residue 55 to 62 (TAGGNGKT).

This sequence belongs to the LpxK family.

It carries out the reaction a lipid A disaccharide + ATP = a lipid IVA + ADP + H(+). Its pathway is glycolipid biosynthesis; lipid IV(A) biosynthesis; lipid IV(A) from (3R)-3-hydroxytetradecanoyl-[acyl-carrier-protein] and UDP-N-acetyl-alpha-D-glucosamine: step 6/6. In terms of biological role, transfers the gamma-phosphate of ATP to the 4'-position of a tetraacyldisaccharide 1-phosphate intermediate (termed DS-1-P) to form tetraacyldisaccharide 1,4'-bis-phosphate (lipid IVA). The chain is Tetraacyldisaccharide 4'-kinase from Yersinia enterocolitica serotype O:8 / biotype 1B (strain NCTC 13174 / 8081).